Consider the following 367-residue polypeptide: CST complex subunit STN1 (367 aa).

Residues 56–154 (VEILGTVIGR…EIRVTTYYKV (99 aa)) constitute a DNA-binding region (OB). 2 winged helix-turn-helix (wHTH) regions span residues 190 to 294 (RAFS…YVTR) and 295 to 367 (EDKE…YTAF).

The protein belongs to the STN1 family. As to quaternary structure, component of the CST complex, composed of TEN1, CTC1 and STN1. Interacts with TEN1 and CTC1; the interaction is direct. Interacts with ACD/TPP1.

It localises to the nucleus. The protein localises to the chromosome. Its subcellular location is the telomere. Component of the CST complex, a complex that binds to single-stranded DNA and is required to protect telomeres from DNA degradation. The CST complex binds single-stranded DNA with high affinity in a sequence-independent manner, while isolated subunits bind DNA with low affinity by themselves. In addition to telomere protection, the CST complex has probably a more general role in DNA metabolism at non-telomeric sites. This Ailuropoda melanoleuca (Giant panda) protein is CST complex subunit STN1.